Here is a 1040-residue protein sequence, read N- to C-terminus: Multidrug resistance protein MdtB (1040 aa).

A run of 12 helical transmembrane segments spans residues Leu25–Ala45, Leu347–Ala367, Ile369–Leu389, Leu396–Ile416, Ile440–Phe460, Phe472–Pro492, Trp537–Ile557, Leu863–Val883, Phe888–Ala908, Ile910–Ile930, Ile968–Val988, and Ile998–Ile1018.

This sequence belongs to the resistance-nodulation-cell division (RND) (TC 2.A.6) family. MdtB subfamily. Part of a tripartite efflux system composed of MdtA, MdtB and MdtC. MdtB forms a heteromultimer with MdtC.

Its subcellular location is the cell inner membrane. This Salmonella gallinarum (strain 287/91 / NCTC 13346) protein is Multidrug resistance protein MdtB.